Reading from the N-terminus, the 621-residue chain is UvrABC system protein C (621 aa).

Residues 21–100 enclose the GIY-YIG domain; the sequence is AEPGVYLMRD…IKTYQPPYNV (80 aa). The UVR domain occupies 210 to 245; that stretch reads DELIRELKEKMAQAAQQENYEAAARYRDQIRGLEQL.

Belongs to the UvrC family. In terms of assembly, interacts with UvrB in an incision complex.

It localises to the cytoplasm. In terms of biological role, the UvrABC repair system catalyzes the recognition and processing of DNA lesions. UvrC both incises the 5' and 3' sides of the lesion. The N-terminal half is responsible for the 3' incision and the C-terminal half is responsible for the 5' incision. In Synechococcus sp. (strain JA-3-3Ab) (Cyanobacteria bacterium Yellowstone A-Prime), this protein is UvrABC system protein C.